We begin with the raw amino-acid sequence, 102 residues long: Crustacean hyperglycemic hormones 3 (102 aa).

Positions 1 to 22 are cleaved as a signal peptide; the sequence is MIALRLIAVTLVVAMAASTTWA. Disulfide bonds link C35–C71, C51–C67, and C54–C80. V100 carries the valine amide modification.

This sequence belongs to the arthropod CHH/MIH/GIH/VIH hormone family.

The protein localises to the secreted. Its function is as follows. Hormone found in the sinus gland of isopods and decapods which controls the blood sugar level. Has a secretagogue action over the amylase released from the midgut gland. May act as a stress hormone and may be involved in the control of molting and reproduction. In Penaeus monodon (Giant tiger prawn), this protein is Crustacean hyperglycemic hormones 3 (CHH3).